Here is a 310-residue protein sequence, read N- to C-terminus: ADP-L-glycero-D-manno-heptose-6-epimerase (310 aa).

Residues 10–11 (FI), 31–32 (DN), Lys38, Lys53, 75–79 (EGACS), and Asn92 contribute to the NADP(+) site. Tyr140 (proton acceptor) is an active-site residue. Lys144 is a binding site for NADP(+). Asn169 is a binding site for substrate. Val170 and Lys178 together coordinate NADP(+). Residue Lys178 is the Proton acceptor of the active site. Substrate-binding positions include Ser180, His187, 201-204 (FEGS), Arg209, and Tyr272.

Belongs to the NAD(P)-dependent epimerase/dehydratase family. HldD subfamily. As to quaternary structure, homopentamer. The cofactor is NADP(+).

The enzyme catalyses ADP-D-glycero-beta-D-manno-heptose = ADP-L-glycero-beta-D-manno-heptose. Its pathway is nucleotide-sugar biosynthesis; ADP-L-glycero-beta-D-manno-heptose biosynthesis; ADP-L-glycero-beta-D-manno-heptose from D-glycero-beta-D-manno-heptose 7-phosphate: step 4/4. Catalyzes the interconversion between ADP-D-glycero-beta-D-manno-heptose and ADP-L-glycero-beta-D-manno-heptose via an epimerization at carbon 6 of the heptose. In Salmonella newport (strain SL254), this protein is ADP-L-glycero-D-manno-heptose-6-epimerase.